Consider the following 101-residue polypeptide: Gastrin (101 aa).

An N-terminal signal peptide occupies residues 1-21 (MQRLCVYVLIFALALAAFSEA). Residues 22-82 (SWKPRSQQPD…SKKQGPWLEE (61 aa)) form a disordered region. Q59 bears the Pyrrolidone carboxylic acid; in form big gastrin mark. Position 76 is a pyrrolidone carboxylic acid; in form gastrin (Q76). At Y87 the chain carries Sulfotyrosine; partial. Phenylalanine amide is present on F92. Phosphoserine is present on S96. Residues 96-101 (SAEDEN) constitute a propeptide, removed in mature form.

This sequence belongs to the gastrin/cholecystokinin family. Post-translationally, two different processing pathways probably exist in antral G-cells. In the dominant pathway progastrin is cleaved at three sites resulting in two major bioactive gastrins, gastrin-34 and gastrin-17. In the putative alternative pathway, progastrin may be processed only at the most C-terminal dibasic site resulting in the synthesis of gastrin-71. Sulfation enhances proteolytic processing, and blocks peptide degradation. Levels of sulfation differ between proteolytically-cleaved gastrins. Thus, gastrin-6 is almost 73% sulfated, whereas the larger gastrins are less than 50% sulfated. Sulfation levels are also tissue-specific.

The protein localises to the secreted. Gastrin stimulates the stomach mucosa to produce and secrete hydrochloric acid and the pancreas to secrete its digestive enzymes. It also stimulates smooth muscle contraction and increases blood circulation and water secretion in the stomach and intestine. The polypeptide is Gastrin (GAST) (Homo sapiens (Human)).